Reading from the N-terminus, the 278-residue chain is Ribosomal RNA small subunit methyltransferase A (278 aa).

6 residues coordinate S-adenosyl-L-methionine: asparagine 28, leucine 30, glycine 55, glutamate 77, aspartate 103, and asparagine 122.

Belongs to the class I-like SAM-binding methyltransferase superfamily. rRNA adenine N(6)-methyltransferase family. RsmA subfamily.

The protein resides in the cytoplasm. It catalyses the reaction adenosine(1518)/adenosine(1519) in 16S rRNA + 4 S-adenosyl-L-methionine = N(6)-dimethyladenosine(1518)/N(6)-dimethyladenosine(1519) in 16S rRNA + 4 S-adenosyl-L-homocysteine + 4 H(+). Its function is as follows. Specifically dimethylates two adjacent adenosines (A1518 and A1519) in the loop of a conserved hairpin near the 3'-end of 16S rRNA in the 30S particle. May play a critical role in biogenesis of 30S subunits. The chain is Ribosomal RNA small subunit methyltransferase A from Cereibacter sphaeroides (strain ATCC 17023 / DSM 158 / JCM 6121 / CCUG 31486 / LMG 2827 / NBRC 12203 / NCIMB 8253 / ATH 2.4.1.) (Rhodobacter sphaeroides).